Consider the following 292-residue polypeptide: Probable 2-(5''-triphosphoribosyl)-3'-dephosphocoenzyme-A synthase (292 aa).

Belongs to the CitG/MdcB family.

The catalysed reaction is 3'-dephospho-CoA + ATP = 2'-(5''-triphospho-alpha-D-ribosyl)-3'-dephospho-CoA + adenine. The chain is Probable 2-(5''-triphosphoribosyl)-3'-dephosphocoenzyme-A synthase from Shigella flexneri.